The following is a 277-amino-acid chain: Putative hydro-lyase BP1875 (277 aa).

Belongs to the D-glutamate cyclase family.

This chain is Putative hydro-lyase BP1875, found in Bordetella pertussis (strain Tohama I / ATCC BAA-589 / NCTC 13251).